The following is a 72-amino-acid chain: Small ribosomal subunit protein bS20 (72 aa).

This sequence belongs to the bacterial ribosomal protein bS20 family.

Its function is as follows. Binds directly to 16S ribosomal RNA. The sequence is that of Small ribosomal subunit protein bS20 (rpsT) from Aeromonas salmonicida.